Consider the following 618-residue polypeptide: Delta-like protein 3 (618 aa).

The N-terminal stretch at 1-26 (MVSPRMSGLLSQTVILALIFLPQTRP) is a signal peptide. Over 27 to 492 (AGVFELQIHS…LRPGDPQRYL (466 aa)) the chain is Extracellular. Residues 176–215 (ARCEPPAVGTACTRLCRPRSAPSRCGPGLRPCAPLEDECE) form the DSL domain. EGF-like domains follow at residues 216–249 (APLV…PLCT), 274–310 (GPGP…LRCE), 312–351 (SGVT…SNCE), 353–389 (RVDR…PRCE), 391–427 (DLDD…RDCR), and 429–465 (RADP…ARCE). 18 disulfide bridges follow: Cys-220/Cys-231, Cys-224/Cys-237, Cys-239/Cys-248, Cys-278/Cys-289, Cys-283/Cys-298, Cys-300/Cys-309, Cys-316/Cys-327, Cys-321/Cys-339, Cys-341/Cys-350, Cys-357/Cys-368, Cys-362/Cys-377, Cys-379/Cys-388, Cys-395/Cys-406, Cys-400/Cys-415, Cys-417/Cys-426, Cys-433/Cys-444, Cys-438/Cys-453, and Cys-455/Cys-464. Residues 493–513 (LPPALGLLVAAGVAGAALLLV) traverse the membrane as a helical segment. Over 514 to 618 (HVRRRGHSQD…PYPSSILSVK (105 aa)) the chain is Cytoplasmic. Polar residues predominate over residues 546–562 (NLRTQEGSGDGPSSSVD). Positions 546–566 (NLRTQEGSGDGPSSSVDWNRP) are disordered.

In terms of assembly, can bind and activate Notch-1 or another Notch receptor. In terms of processing, ubiquitinated by MIB (MIB1 or MIB2), leading to its endocytosis and subsequent degradation.

It is found in the membrane. Inhibits primary neurogenesis. May be required to divert neurons along a specific differentiation pathway. Plays a role in the formation of somite boundaries during segmentation of the paraxial mesoderm. The sequence is that of Delta-like protein 3 (DLL3) from Homo sapiens (Human).